A 566-amino-acid chain; its full sequence is Probable cytochrome P450 519D1 (566 aa).

Residues 1 to 21 (MNVFVLTFFICIIYLLFDLIK) form a helical membrane-spanning segment. Residues 471-491 (FNNNNNNNNNNNNNNSNNKHK) form a disordered region. Low complexity predominate over residues 472 to 487 (NNNNNNNNNNNNNNSN). C510 is a binding site for heme.

Belongs to the cytochrome P450 family. The cofactor is heme.

The protein resides in the membrane. This chain is Probable cytochrome P450 519D1 (cyp519D1), found in Dictyostelium discoideum (Social amoeba).